Here is a 230-residue protein sequence, read N- to C-terminus: Protein FAM3A (230 aa).

A signal peptide spans 1-33 (MRLAGPLRIVVLVVSVGVTWIVVSILLGGPGSG). Disulfide bonds link Cys59-Cys87 and Cys65-Cys222. One can recognise a GG-type lectin domain in the interval 68–226 (EHLAFRVVSG…LEMEGCIPRR (159 aa)).

This sequence belongs to the FAM3 family. In similar amounts in testis, pancreas, adrenal, placenta, brain, fetal brain, liver, kidney, skeletal muscle and heart.

The protein localises to the secreted. Its function is as follows. May act as a defensin against invading fungal microorganisms. In Homo sapiens (Human), this protein is Protein FAM3A (FAM3A).